The sequence spans 188 residues: Josephin-2 (188 aa).

One can recognise a Josephin domain in the interval 11–188 (PPTVYHERQR…EEKGSWLRTD (178 aa)). Cys24 acts as the Nucleophile in catalysis. The active-site Proton acceptor is the His125.

It localises to the cytoplasm. Its subcellular location is the cytosol. It carries out the reaction Thiol-dependent hydrolysis of ester, thioester, amide, peptide and isopeptide bonds formed by the C-terminal Gly of ubiquitin (a 76-residue protein attached to proteins as an intracellular targeting signal).. Its function is as follows. Cleaves 'Lys-63'-linked poly-ubiquitin chains, and with lesser efficiency 'Lys-48'-linked poly-ubiquitin chains (in vitro). May act as a deubiquitinating enzyme. The polypeptide is Josephin-2 (JOSD2) (Homo sapiens (Human)).